Reading from the N-terminus, the 240-residue chain is Biosynthetic peptidoglycan transglycosylase (240 aa).

A helical transmembrane segment spans residues 15–35 (WMVYLGAVVAIAWLATQAFYF).

It belongs to the glycosyltransferase 51 family.

The protein resides in the cell inner membrane. The catalysed reaction is [GlcNAc-(1-&gt;4)-Mur2Ac(oyl-L-Ala-gamma-D-Glu-L-Lys-D-Ala-D-Ala)](n)-di-trans,octa-cis-undecaprenyl diphosphate + beta-D-GlcNAc-(1-&gt;4)-Mur2Ac(oyl-L-Ala-gamma-D-Glu-L-Lys-D-Ala-D-Ala)-di-trans,octa-cis-undecaprenyl diphosphate = [GlcNAc-(1-&gt;4)-Mur2Ac(oyl-L-Ala-gamma-D-Glu-L-Lys-D-Ala-D-Ala)](n+1)-di-trans,octa-cis-undecaprenyl diphosphate + di-trans,octa-cis-undecaprenyl diphosphate + H(+). It participates in cell wall biogenesis; peptidoglycan biosynthesis. Functionally, peptidoglycan polymerase that catalyzes glycan chain elongation from lipid-linked precursors. In Paraburkholderia phytofirmans (strain DSM 17436 / LMG 22146 / PsJN) (Burkholderia phytofirmans), this protein is Biosynthetic peptidoglycan transglycosylase.